Consider the following 310-residue polypeptide: Ribosomal RNA small subunit methyltransferase H (310 aa).

S-adenosyl-L-methionine-binding positions include 33-35 (GGH), Asp52, Phe79, Asp98, and Gln105.

Belongs to the methyltransferase superfamily. RsmH family.

The protein localises to the cytoplasm. The catalysed reaction is cytidine(1402) in 16S rRNA + S-adenosyl-L-methionine = N(4)-methylcytidine(1402) in 16S rRNA + S-adenosyl-L-homocysteine + H(+). Its function is as follows. Specifically methylates the N4 position of cytidine in position 1402 (C1402) of 16S rRNA. The sequence is that of Ribosomal RNA small subunit methyltransferase H from Campylobacter jejuni subsp. jejuni serotype O:6 (strain 81116 / NCTC 11828).